Reading from the N-terminus, the 671-residue chain is Probable potassium transport system protein Kup (671 aa).

Residues M1–H43 are disordered. Over residues P10 to G37 the composition is skewed to low complexity. The next 12 helical transmembrane spans lie at L52–L72, V92–M112, L147–I167, P181–F201, V209–V229, G255–L275, W291–L311, L323–V343, I381–F401, L407–H427, A441–V461, and D465–K485.

The protein belongs to the HAK/KUP transporter (TC 2.A.72) family.

The protein resides in the cell inner membrane. It catalyses the reaction K(+)(in) + H(+)(in) = K(+)(out) + H(+)(out). Transport of potassium into the cell. Likely operates as a K(+):H(+) symporter. In Anaeromyxobacter dehalogenans (strain 2CP-1 / ATCC BAA-258), this protein is Probable potassium transport system protein Kup.